Here is a 425-residue protein sequence, read N- to C-terminus: UDP-N-acetylglucosamine 1-carboxyvinyltransferase (425 aa).

22-23 (KN) serves as a coordination point for phosphoenolpyruvate. Arg-98 contacts UDP-N-acetyl-alpha-D-glucosamine. The active-site Proton donor is Cys-122. Cys-122 carries the 2-(S-cysteinyl)pyruvic acid O-phosphothioketal modification. Residues 127 to 131 (RPVDQ), Asp-313, and Ile-335 each bind UDP-N-acetyl-alpha-D-glucosamine.

The protein belongs to the EPSP synthase family. MurA subfamily.

It localises to the cytoplasm. It catalyses the reaction phosphoenolpyruvate + UDP-N-acetyl-alpha-D-glucosamine = UDP-N-acetyl-3-O-(1-carboxyvinyl)-alpha-D-glucosamine + phosphate. It participates in cell wall biogenesis; peptidoglycan biosynthesis. Cell wall formation. Adds enolpyruvyl to UDP-N-acetylglucosamine. This Xylella fastidiosa (strain 9a5c) protein is UDP-N-acetylglucosamine 1-carboxyvinyltransferase.